The primary structure comprises 69 residues: Dodecin (69 aa).

3–5 (KVY) serves as a coordination point for FMN. Residues Lys-6, Arg-28, and 32–34 (TLR) each bind CoA. Residues Asp-37, Trp-38, Arg-45, Gln-57, and Arg-65 each contribute to the FMN site. Residue 65–67 (RLE) participates in CoA binding.

It belongs to the dodecin family. As to quaternary structure, homododecamer; four homotrimers assemble to form a dodecameric hollow sphere with an outer diameter of about 60 Angstroms. Flavin dimers are bound between subunits with a stoichiometry of 6 flavin dimers per dodecamer. Besides, trimeric coenzyme A molecules can be bound between subunits. A dodecamer can bind simultaneously 12 flavin and 12 coenzyme A molecules.

Its function is as follows. May function as storage protein that sequesters various flavins and other cofactors, thereby protecting the cell against undesirable reactions mediated by the free cofactors. Binds and sequesters FMN, FAD, lumiflavin and lumichrome, and can also bind coenzyme A. This chain is Dodecin, found in Thermus thermophilus (strain ATCC 27634 / DSM 579 / HB8).